The primary structure comprises 273 residues: Dermonecrotic toxin LapSicTox-alphaIB1ai (273 aa).

His-5 is an active-site residue. Positions 25 and 27 each coordinate Mg(2+). Catalysis depends on His-41, which acts as the Nucleophile. 2 cysteine pairs are disulfide-bonded: Cys-45–Cys-51 and Cys-47–Cys-190. Asp-85 contacts Mg(2+). N-linked (GlcNAc...) asparagine glycosylation occurs at Asn-250.

The protein belongs to the arthropod phospholipase D family. Class II subfamily. Mg(2+) serves as cofactor. In terms of tissue distribution, expressed by the venom gland.

It localises to the secreted. It carries out the reaction an N-(acyl)-sphingosylphosphocholine = an N-(acyl)-sphingosyl-1,3-cyclic phosphate + choline. The enzyme catalyses an N-(acyl)-sphingosylphosphoethanolamine = an N-(acyl)-sphingosyl-1,3-cyclic phosphate + ethanolamine. It catalyses the reaction a 1-acyl-sn-glycero-3-phosphocholine = a 1-acyl-sn-glycero-2,3-cyclic phosphate + choline. The catalysed reaction is a 1-acyl-sn-glycero-3-phosphoethanolamine = a 1-acyl-sn-glycero-2,3-cyclic phosphate + ethanolamine. Dermonecrotic toxins cleave the phosphodiester linkage between the phosphate and headgroup of certain phospholipids (sphingolipid and lysolipid substrates), forming an alcohol (often choline) and a cyclic phosphate. This toxin acts on sphingomyelin (SM). It may also act on ceramide phosphoethanolamine (CPE), lysophosphatidylcholine (LPC) and lysophosphatidylethanolamine (LPE), but not on lysophosphatidylserine (LPS), and lysophosphatidylglycerol (LPG). It acts by transphosphatidylation, releasing exclusively cyclic phosphate products as second products. Induces dermonecrosis, hemolysis, increased vascular permeability, edema, inflammatory response, and platelet aggregation. The chain is Dermonecrotic toxin LapSicTox-alphaIB1ai from Loxosceles apachea (Apache recluse spider).